We begin with the raw amino-acid sequence, 70 residues long: MVYQSRSFQVEVSGLHQNEVTNQNNYPIRSSGSVFITIPFSRFNEELQRINRLGGKIVNIQPLNLQINEN.

A CpcD-like domain is found at 5-63; it reads SRSFQVEVSGLHQNEVTNQNNYPIRSSGSVFITIPFSRFNEELQRINRLGGKIVNIQPL.

The protein belongs to the phycobilisome linker protein family.

The protein resides in the cellular thylakoid membrane. Rod linker protein, associated with phycocyanin. Linker polypeptides determine the state of aggregation and the location of the disk-shaped phycobiliprotein units within the phycobilisome and modulate their spectroscopic properties in order to mediate a directed and optimal energy transfer. In Microchaete diplosiphon (Fremyella diplosiphon), this protein is Phycobilisome 8.1 kDa linker polypeptide, phycocyanin-associated, rod (cpcD3).